The primary structure comprises 256 residues: Hydroxyacylglutathione hydrolase (256 aa).

Zn(2+) contacts are provided by His58, His60, Asp62, His63, His116, Asp135, and His173.

The protein belongs to the metallo-beta-lactamase superfamily. Glyoxalase II family. In terms of assembly, monomer. It depends on Zn(2+) as a cofactor.

It carries out the reaction an S-(2-hydroxyacyl)glutathione + H2O = a 2-hydroxy carboxylate + glutathione + H(+). Its pathway is secondary metabolite metabolism; methylglyoxal degradation; (R)-lactate from methylglyoxal: step 2/2. Functionally, thiolesterase that catalyzes the hydrolysis of S-D-lactoyl-glutathione to form glutathione and D-lactic acid. The protein is Hydroxyacylglutathione hydrolase of Hyphomonas neptunium (strain ATCC 15444).